Reading from the N-terminus, the 345-residue chain is Anthranilate phosphoribosyltransferase 1 (345 aa).

5-phospho-alpha-D-ribose 1-diphosphate is bound by residues Gly86, Gly89–Asp90, Thr94, Asn96–Thr99, Lys114–Ser122, and Ser126. Gly86 is a binding site for anthranilate. Ser98 contacts Mg(2+). Arg172 lines the anthranilate pocket. Mg(2+) is bound by residues Asp231 and Glu232.

This sequence belongs to the anthranilate phosphoribosyltransferase family. Homodimer. Mg(2+) is required as a cofactor.

The catalysed reaction is N-(5-phospho-beta-D-ribosyl)anthranilate + diphosphate = 5-phospho-alpha-D-ribose 1-diphosphate + anthranilate. It participates in amino-acid biosynthesis; L-tryptophan biosynthesis; L-tryptophan from chorismate: step 2/5. Functionally, catalyzes the transfer of the phosphoribosyl group of 5-phosphorylribose-1-pyrophosphate (PRPP) to anthranilate to yield N-(5'-phosphoribosyl)-anthranilate (PRA). This is Anthranilate phosphoribosyltransferase 1 from Ralstonia nicotianae (strain ATCC BAA-1114 / GMI1000) (Ralstonia solanacearum).